The chain runs to 455 residues: UDP-N-acetylmuramoylalanine--D-glutamate ligase (455 aa).

Position 117–123 (117–123 (GSAGKTT)) interacts with ATP.

The protein belongs to the MurCDEF family.

Its subcellular location is the cytoplasm. The enzyme catalyses UDP-N-acetyl-alpha-D-muramoyl-L-alanine + D-glutamate + ATP = UDP-N-acetyl-alpha-D-muramoyl-L-alanyl-D-glutamate + ADP + phosphate + H(+). It participates in cell wall biogenesis; peptidoglycan biosynthesis. Cell wall formation. Catalyzes the addition of glutamate to the nucleotide precursor UDP-N-acetylmuramoyl-L-alanine (UMA). This chain is UDP-N-acetylmuramoylalanine--D-glutamate ligase, found in Symbiobacterium thermophilum (strain DSM 24528 / JCM 14929 / IAM 14863 / T).